A 35-amino-acid polypeptide reads, in one-letter code: Coatomer subunit alpha (35 aa).

Oligomeric complex that consists of at least the alpha, beta, beta', gamma, delta, epsilon and zeta subunits. Interacts with SCYL1. Interacts with JAGN1. Interacts with TMEM41B. Interacts with SVEP1. Probably interacts with PEX11A. As to expression, gastric, duodenal and jejunal mucosa. Circulates in the blood. Seems to be confined to specific endocrine cells.

In terms of biological role, xenin stimulates exocrine pancreatic secretion. It inhibits pentagastrin-stimulated secretion of acid, to induce exocrine pancreatic secretion and to affect small and large intestinal motility. In the gut, xenin interacts with the neurotensin receptor. The sequence is that of Coatomer subunit alpha (COPA) from Canis lupus familiaris (Dog).